The primary structure comprises 131 residues: Rhodopsin (131 aa).

The Extracellular segment spans residues 1–16 (CGIDYYTRAPGYNNES). Asparagine 14 is a glycosylation site (N-linked (GlcNAc...) asparagine). A helical transmembrane segment spans residues 17-38 (FVIYMFIVHFLIPLFIISFCYG). The Cytoplasmic portion of the chain corresponds to 39-66 (NLLCAVKAAAAAQEESETTQRAEREVTR). The helical transmembrane segment at 67–88 (MVIMMVISYLVSWVPYASVAWY) threads the bilayer. At 89-100 (IFSNQGSEFGPV) the chain is on the extracellular side. A helical membrane pass occupies residues 101-122 (FMTIPAFFAKSSALYNPLIYVL). Lysine 110 carries the post-translational modification N6-(retinylidene)lysine. Residues 123–131 (MNKQFRHCM) are Cytoplasmic-facing.

Belongs to the G-protein coupled receptor 1 family. Opsin subfamily. In terms of processing, phosphorylated on some or all of the serine and threonine residues present in the C-terminal region. Post-translationally, contains one covalently linked retinal chromophore.

Its subcellular location is the membrane. It is found in the cell projection. It localises to the cilium. The protein resides in the photoreceptor outer segment. In terms of biological role, photoreceptor required for image-forming vision at low light intensity. While most salt water fish species use retinal as chromophore, most freshwater fish use 3-dehydroretinal, or a mixture of retinal and 3-dehydroretinal. Light-induced isomerization of 11-cis to all-trans retinal triggers a conformational change that activates signaling via G-proteins. Subsequent receptor phosphorylation mediates displacement of the bound G-protein alpha subunit by arrestin and terminates signaling. The sequence is that of Rhodopsin (rho) from Coregonus autumnalis (Arctic cisco).